Reading from the N-terminus, the 460-residue chain is Bifunctional protein GlmU (460 aa).

The tract at residues 1–233 (MLDIVIMAAG…ETEVLGVNSP (233 aa)) is pyrophosphorylase. Residues Lys21, Gln76, and 81-82 (GT) each bind UDP-N-acetyl-alpha-D-glucosamine. A Mg(2+)-binding site is contributed by Asp105. Residues Gly140, Glu158, and Asn231 each contribute to the UDP-N-acetyl-alpha-D-glucosamine site. Asn231 lines the Mg(2+) pocket. Residues 234–254 (LQLADLERRLQRKQAEALLEA) form a linker region. The segment at 255 to 460 (GVRLADPARF…AGWQRPQKKR (206 aa)) is N-acetyltransferase. Residues Arg337 and Lys355 each coordinate UDP-N-acetyl-alpha-D-glucosamine. His367 (proton acceptor) is an active-site residue. Residues Tyr370 and Asn381 each contribute to the UDP-N-acetyl-alpha-D-glucosamine site. Acetyl-CoA-binding positions include Ala384, 390–391 (NY), Ser409, Gly427, and Arg444.

In the N-terminal section; belongs to the N-acetylglucosamine-1-phosphate uridyltransferase family. The protein in the C-terminal section; belongs to the transferase hexapeptide repeat family. As to quaternary structure, homotrimer. The cofactor is Mg(2+).

The protein resides in the cytoplasm. It carries out the reaction alpha-D-glucosamine 1-phosphate + acetyl-CoA = N-acetyl-alpha-D-glucosamine 1-phosphate + CoA + H(+). The enzyme catalyses N-acetyl-alpha-D-glucosamine 1-phosphate + UTP + H(+) = UDP-N-acetyl-alpha-D-glucosamine + diphosphate. It functions in the pathway nucleotide-sugar biosynthesis; UDP-N-acetyl-alpha-D-glucosamine biosynthesis; N-acetyl-alpha-D-glucosamine 1-phosphate from alpha-D-glucosamine 6-phosphate (route II): step 2/2. It participates in nucleotide-sugar biosynthesis; UDP-N-acetyl-alpha-D-glucosamine biosynthesis; UDP-N-acetyl-alpha-D-glucosamine from N-acetyl-alpha-D-glucosamine 1-phosphate: step 1/1. Its pathway is bacterial outer membrane biogenesis; LPS lipid A biosynthesis. In terms of biological role, catalyzes the last two sequential reactions in the de novo biosynthetic pathway for UDP-N-acetylglucosamine (UDP-GlcNAc). The C-terminal domain catalyzes the transfer of acetyl group from acetyl coenzyme A to glucosamine-1-phosphate (GlcN-1-P) to produce N-acetylglucosamine-1-phosphate (GlcNAc-1-P), which is converted into UDP-GlcNAc by the transfer of uridine 5-monophosphate (from uridine 5-triphosphate), a reaction catalyzed by the N-terminal domain. This is Bifunctional protein GlmU from Methylibium petroleiphilum (strain ATCC BAA-1232 / LMG 22953 / PM1).